Here is a 319-residue protein sequence, read N- to C-terminus: MNPNYLDFEQPIADLEAKIQELRNASAGPAVNVEAEVHALQDKLRLRTAQIFRNLTSWQVLQLARHPSRPYTADYLRVMFDEFQELAGDRAFADDKAIMGGLARINGRSVMVIGHQKGRDTKEKIKRNFGMPKPEGYRKALRLMKMAERFGLPVLTLIDTAGAWPGIDAESRGQSEAIARNLIEMAELKVPIICTVIGEGGSGGALALGVGDRTVMLEYAVYSTITPEGCASILWKDAGKAKDAAEQLGLTAPRLKSLGLVDKVVREPTGGAHRNPTQMAKRLKAVLLNELDALEKLSTEQLLEQRYTRLRSYGTYEAA.

Residues His38–Ala293 enclose the CoA carboxyltransferase C-terminal domain.

The protein belongs to the AccA family. As to quaternary structure, acetyl-CoA carboxylase is a heterohexamer composed of biotin carboxyl carrier protein (AccB), biotin carboxylase (AccC) and two subunits each of ACCase subunit alpha (AccA) and ACCase subunit beta (AccD).

It is found in the cytoplasm. It carries out the reaction N(6)-carboxybiotinyl-L-lysyl-[protein] + acetyl-CoA = N(6)-biotinyl-L-lysyl-[protein] + malonyl-CoA. It participates in lipid metabolism; malonyl-CoA biosynthesis; malonyl-CoA from acetyl-CoA: step 1/1. In terms of biological role, component of the acetyl coenzyme A carboxylase (ACC) complex. First, biotin carboxylase catalyzes the carboxylation of biotin on its carrier protein (BCCP) and then the CO(2) group is transferred by the carboxyltransferase to acetyl-CoA to form malonyl-CoA. The sequence is that of Acetyl-coenzyme A carboxylase carboxyl transferase subunit alpha from Stenotrophomonas maltophilia (strain R551-3).